A 592-amino-acid chain; its full sequence is Aspartate--tRNA(Asp/Asn) ligase (592 aa).

Glu-175 contacts L-aspartate. The interval 199-202 (QLFK) is aspartate. Residue Arg-221 participates in L-aspartate binding. ATP contacts are provided by residues 221–223 (RDE) and Gln-230. An L-aspartate-binding site is contributed by His-450. Position 483 (Glu-483) interacts with ATP. Arg-490 serves as a coordination point for L-aspartate. 535–538 (GLDR) is an ATP binding site.

The protein belongs to the class-II aminoacyl-tRNA synthetase family. Type 1 subfamily. As to quaternary structure, homodimer.

The protein resides in the cytoplasm. The enzyme catalyses tRNA(Asx) + L-aspartate + ATP = L-aspartyl-tRNA(Asx) + AMP + diphosphate. Its function is as follows. Aspartyl-tRNA synthetase with relaxed tRNA specificity since it is able to aspartylate not only its cognate tRNA(Asp) but also tRNA(Asn). Reaction proceeds in two steps: L-aspartate is first activated by ATP to form Asp-AMP and then transferred to the acceptor end of tRNA(Asp/Asn). In Acinetobacter baumannii (strain AB307-0294), this protein is Aspartate--tRNA(Asp/Asn) ligase.